A 351-amino-acid polypeptide reads, in one-letter code: Ribosomal RNA large subunit methyltransferase M (351 aa).

Residues Ser183, 216-219, Asp235, Asp255, and Asp271 each bind S-adenosyl-L-methionine; that span reads APGG. Lys300 acts as the Proton acceptor in catalysis.

This sequence belongs to the class I-like SAM-binding methyltransferase superfamily. RNA methyltransferase RlmE family. RlmM subfamily. As to quaternary structure, monomer.

Its subcellular location is the cytoplasm. It catalyses the reaction cytidine(2498) in 23S rRNA + S-adenosyl-L-methionine = 2'-O-methylcytidine(2498) in 23S rRNA + S-adenosyl-L-homocysteine + H(+). In terms of biological role, catalyzes the 2'-O-methylation at nucleotide C2498 in 23S rRNA. The chain is Ribosomal RNA large subunit methyltransferase M from Ectopseudomonas mendocina (strain ymp) (Pseudomonas mendocina).